We begin with the raw amino-acid sequence, 318 residues long: uncharacterized protein (318 aa).

Transmembrane regions (helical) follow at residues 230–250 (VWTY…SFLI) and 264–284 (ASLM…LGVI).

It belongs to the glycosyltransferase 2 family. GtrB subfamily.

The protein resides in the cell membrane. This is an uncharacterized protein from Synechocystis sp. (strain ATCC 27184 / PCC 6803 / Kazusa).